The chain runs to 673 residues: Poly(glycerol-phosphate) alpha-glucosyltransferase (673 aa).

Residue Ser2 is modified to Phosphoserine.

This sequence belongs to the glycosyltransferase group 1 family. Glycosyltransferase 4 subfamily.

The protein resides in the cytoplasm. It catalyses the reaction 4-O-{[(2R)-1-glycerylphospho](n)-(2R)-1-glycerylphospho}-N-acetyl-beta-D-mannosaminyl-(1-&gt;4)-N-acetyl-alpha-D-glucosaminyl undecaprenyl diphosphate + n UDP-alpha-D-glucose = 4-O-{[(2R)-2-alpha-D-glucosyl-1-glycerylphospho](n)-(2R)-1-glycerylphospho}-N-acetyl-beta-D-mannosaminyl-(1-&gt;4)-N-acetyl-alpha-D-glucosaminyl undecaprenyl diphosphate + n UDP + n H(+). The protein operates within cell wall biogenesis; poly(glycerol phosphate) teichoic acid biosynthesis. Catalyzes the addition of glucose to the C-2 hydroxy group of the glycerol units in teichoic acid. This chain is Poly(glycerol-phosphate) alpha-glucosyltransferase (tagE), found in Bacillus subtilis (strain 168).